The chain runs to 461 residues: Cytochrome c biogenesis protein CcsB (461 aa).

A run of 3 helical transmembrane segments spans residues L32–I52, T91–T111, and I178–A198.

Belongs to the Ccs1/CcsB family. In terms of assembly, may interact with CcsA.

The protein resides in the cellular thylakoid membrane. In terms of biological role, required during biogenesis of c-type cytochromes (cytochrome c6 and cytochrome f) at the step of heme attachment. In Nostoc sp. (strain PCC 7120 / SAG 25.82 / UTEX 2576), this protein is Cytochrome c biogenesis protein CcsB.